The chain runs to 197 residues: Phosphoheptose isomerase (197 aa).

The SIS domain maps to 36 to 197 (MVNALLNEGK…IDRQLFGSEE (162 aa)). A substrate-binding site is contributed by 51-53 (NGG). The Zn(2+) site is built by His-60 and Glu-64. Residues Glu-64, 93–94 (ND), 119–121 (STS), Ser-124, and Gln-174 each bind substrate. Positions 174 and 182 each coordinate Zn(2+).

Belongs to the SIS family. GmhA subfamily. As to quaternary structure, homotetramer. Requires Zn(2+) as cofactor.

Its subcellular location is the cytoplasm. It catalyses the reaction 2 D-sedoheptulose 7-phosphate = D-glycero-alpha-D-manno-heptose 7-phosphate + D-glycero-beta-D-manno-heptose 7-phosphate. The protein operates within carbohydrate biosynthesis; D-glycero-D-manno-heptose 7-phosphate biosynthesis; D-glycero-alpha-D-manno-heptose 7-phosphate and D-glycero-beta-D-manno-heptose 7-phosphate from sedoheptulose 7-phosphate: step 1/1. Catalyzes the isomerization of sedoheptulose 7-phosphate in D-glycero-D-manno-heptose 7-phosphate. In Pseudomonas aeruginosa (strain LESB58), this protein is Phosphoheptose isomerase.